The chain runs to 354 residues: UDP-N-acetylglucosamine--N-acetylmuramyl-(pentapeptide) pyrophosphoryl-undecaprenol N-acetylglucosamine transferase (354 aa).

UDP-N-acetyl-alpha-D-glucosamine-binding positions include S13–G15, N125, S189, I242, A261–E266, and Q286.

It belongs to the glycosyltransferase 28 family. MurG subfamily.

The protein localises to the cell inner membrane. It carries out the reaction di-trans,octa-cis-undecaprenyl diphospho-N-acetyl-alpha-D-muramoyl-L-alanyl-D-glutamyl-meso-2,6-diaminopimeloyl-D-alanyl-D-alanine + UDP-N-acetyl-alpha-D-glucosamine = di-trans,octa-cis-undecaprenyl diphospho-[N-acetyl-alpha-D-glucosaminyl-(1-&gt;4)]-N-acetyl-alpha-D-muramoyl-L-alanyl-D-glutamyl-meso-2,6-diaminopimeloyl-D-alanyl-D-alanine + UDP + H(+). It functions in the pathway cell wall biogenesis; peptidoglycan biosynthesis. Its function is as follows. Cell wall formation. Catalyzes the transfer of a GlcNAc subunit on undecaprenyl-pyrophosphoryl-MurNAc-pentapeptide (lipid intermediate I) to form undecaprenyl-pyrophosphoryl-MurNAc-(pentapeptide)GlcNAc (lipid intermediate II). This Buchnera aphidicola subsp. Acyrthosiphon pisum (strain 5A) protein is UDP-N-acetylglucosamine--N-acetylmuramyl-(pentapeptide) pyrophosphoryl-undecaprenol N-acetylglucosamine transferase.